Here is a 433-residue protein sequence, read N- to C-terminus: Glutamate-1-semialdehyde 2,1-aminomutase (433 aa).

Lys269 is modified (N6-(pyridoxal phosphate)lysine).

Belongs to the class-III pyridoxal-phosphate-dependent aminotransferase family. HemL subfamily. In terms of assembly, homodimer. Requires pyridoxal 5'-phosphate as cofactor.

Its subcellular location is the cytoplasm. It catalyses the reaction (S)-4-amino-5-oxopentanoate = 5-aminolevulinate. The protein operates within porphyrin-containing compound metabolism; protoporphyrin-IX biosynthesis; 5-aminolevulinate from L-glutamyl-tRNA(Glu): step 2/2. This is Glutamate-1-semialdehyde 2,1-aminomutase from Renibacterium salmoninarum (strain ATCC 33209 / DSM 20767 / JCM 11484 / NBRC 15589 / NCIMB 2235).